The primary structure comprises 133 residues: MATNRRVSRVAELIKREVSQMLINGIKDDRVGTGMVSVTDVDVSGDLQHAKIYVSIYGTEEAKAETMAGLKSATGFVRSELGARVRLRRTPEVTFIEDRSIERGTKVLTLLNKLENARSLDDIPSADDSLDED.

It belongs to the RbfA family. In terms of assembly, monomer. Binds 30S ribosomal subunits, but not 50S ribosomal subunits or 70S ribosomes.

It is found in the cytoplasm. One of several proteins that assist in the late maturation steps of the functional core of the 30S ribosomal subunit. Associates with free 30S ribosomal subunits (but not with 30S subunits that are part of 70S ribosomes or polysomes). Required for efficient processing of 16S rRNA. May interact with the 5'-terminal helix region of 16S rRNA. The chain is Ribosome-binding factor A from Trichormus variabilis (strain ATCC 29413 / PCC 7937) (Anabaena variabilis).